The primary structure comprises 186 residues: Shikimate kinase (186 aa).

15 to 20 (GAGKTT) contributes to the ATP binding site. Thr-19 lines the Mg(2+) pocket. Positions 37, 61, and 83 each coordinate substrate. An ATP-binding site is contributed by Arg-121. Arg-140 contacts substrate.

This sequence belongs to the shikimate kinase family. Monomer. Requires Mg(2+) as cofactor.

It localises to the cytoplasm. The catalysed reaction is shikimate + ATP = 3-phosphoshikimate + ADP + H(+). The protein operates within metabolic intermediate biosynthesis; chorismate biosynthesis; chorismate from D-erythrose 4-phosphate and phosphoenolpyruvate: step 5/7. Its function is as follows. Catalyzes the specific phosphorylation of the 3-hydroxyl group of shikimic acid using ATP as a cosubstrate. The protein is Shikimate kinase of Psychrobacter cryohalolentis (strain ATCC BAA-1226 / DSM 17306 / VKM B-2378 / K5).